The chain runs to 444 residues: Elongation factor 1-alpha (444 aa).

In terms of domain architecture, tr-type G spans 14-235 (KPHLNLAIIG…ALDAIEPPPR (222 aa)). The segment at 23–30 (GHVDHGKS) is G1. 23 to 30 (GHVDHGKS) contacts GTP. Residue serine 30 coordinates Mg(2+). The G2 stretch occupies residues 79–83 (GVTIE). The segment at 100 to 103 (DLPG) is G3. GTP-binding positions include 100–104 (DLPGH) and 162–165 (NKMD). The interval 162-165 (NKMD) is G4. The segment at 201–203 (SAV) is G5.

The protein belongs to the TRAFAC class translation factor GTPase superfamily. Classic translation factor GTPase family. EF-Tu/EF-1A subfamily.

It localises to the cytoplasm. The enzyme catalyses GTP + H2O = GDP + phosphate + H(+). Functionally, GTP hydrolase that promotes the GTP-dependent binding of aminoacyl-tRNA to the A-site of ribosomes during protein biosynthesis. This Caldivirga maquilingensis (strain ATCC 700844 / DSM 13496 / JCM 10307 / IC-167) protein is Elongation factor 1-alpha.